The chain runs to 240 residues: Putative cytochrome c-type biogenesis protein DbsD-like (240 aa).

The next 6 helical transmembrane spans lie at 32 to 52 (FVFF…ILPI), 74 to 94 (FFFC…ATLL), 104 to 124 (GIPV…LNIV), 149 to 169 (VGIG…LLIW), 176 to 196 (LFIG…PIII), and 218 to 238 (APFS…SSIL).

This sequence belongs to the DsbD family.

It localises to the plastid. The protein resides in the chloroplast membrane. Its function is as follows. Could be involved in cytochrome c synthesis. The sequence is that of Putative cytochrome c-type biogenesis protein DbsD-like from Porphyra purpurea (Red seaweed).